A 528-amino-acid chain; its full sequence is Peptide chain release factor 3 (528 aa).

Residues 10–278 (DRRRTFGIIS…AFVEQAPVPR (269 aa)) form the tr-type G domain. GTP-binding positions include 19-26 (SHPDAGKT), 87-91 (DTPGH), and 141-144 (NKLD).

The protein belongs to the TRAFAC class translation factor GTPase superfamily. Classic translation factor GTPase family. PrfC subfamily.

The protein localises to the cytoplasm. Functionally, increases the formation of ribosomal termination complexes and stimulates activities of RF-1 and RF-2. It binds guanine nucleotides and has strong preference for UGA stop codons. It may interact directly with the ribosome. The stimulation of RF-1 and RF-2 is significantly reduced by GTP and GDP, but not by GMP. This Syntrophotalea carbinolica (strain DSM 2380 / NBRC 103641 / GraBd1) (Pelobacter carbinolicus) protein is Peptide chain release factor 3.